We begin with the raw amino-acid sequence, 1809 residues long: Stereocilin (1809 aa).

A signal peptide spans 1 to 22; it reads MALSLQPQLLLLLSLLPQEVTS. N-linked (GlcNAc...) asparagine glycosylation is found at Asn-63, Asn-200, Asn-295, Asn-352, and Asn-364. Residues 376–426 form a disordered region; sequence PATPRPPPTTPRPPPTTPQPPPTTTQPIPDTTQPPPVTPRPPPTTPQPPPS. Composition is skewed to pro residues over residues 378 to 399 and 407 to 426; these read TPRP…PPTT and TQPP…PPPS. 10 N-linked (GlcNAc...) asparagine glycosylation sites follow: Asn-467, Asn-516, Asn-580, Asn-605, Asn-696, Asn-860, Asn-952, Asn-1000, Asn-1213, and Asn-1308.

This sequence belongs to the stereocilin family. As to expression, strongly expressed in the inner ear, detected in the testis, and barely detected in the eye. Detected in the six sensory areas of the inner ear by immunofluorescence. Expressed only in the sensory hair cells and associated with the stereocilia, the stiff microvilli forming the structure for mechanoreception of sound stimulation.

It is found in the cell surface. The protein resides in the cell projection. Its subcellular location is the kinocilium. The protein localises to the stereocilium. In terms of biological role, essential to the formation of horizontal top connectors between outer hair cell stereocilia. This Mus musculus (Mouse) protein is Stereocilin (Strc).